The primary structure comprises 306 residues: Homeobox protein Hox-C13a (306 aa).

The homeobox DNA-binding region spans 236-295 (GRKKRVPYTKIQLKELEKEYAASKFITKDKRRRISATTNLSERQVTIWFQNRRVKEKKFV).

Belongs to the Abd-B homeobox family.

It localises to the nucleus. In terms of biological role, sequence-specific transcription factor which is part of a developmental regulatory system that provides cells with specific positional identities on the anterior-posterior axis. In Danio rerio (Zebrafish), this protein is Homeobox protein Hox-C13a (hoxc13a).